A 203-amino-acid polypeptide reads, in one-letter code: ATP-dependent Clp protease proteolytic subunit (203 aa).

Residue Ser103 is the Nucleophile of the active site. His128 is an active-site residue.

The protein belongs to the peptidase S14 family. In terms of assembly, fourteen ClpP subunits assemble into 2 heptameric rings which stack back to back to give a disk-like structure with a central cavity, resembling the structure of eukaryotic proteasomes.

The protein localises to the cytoplasm. The catalysed reaction is Hydrolysis of proteins to small peptides in the presence of ATP and magnesium. alpha-casein is the usual test substrate. In the absence of ATP, only oligopeptides shorter than five residues are hydrolyzed (such as succinyl-Leu-Tyr-|-NHMec, and Leu-Tyr-Leu-|-Tyr-Trp, in which cleavage of the -Tyr-|-Leu- and -Tyr-|-Trp bonds also occurs).. Its function is as follows. Cleaves peptides in various proteins in a process that requires ATP hydrolysis. Has a chymotrypsin-like activity. Plays a major role in the degradation of misfolded proteins. The chain is ATP-dependent Clp protease proteolytic subunit from Dichelobacter nodosus (strain VCS1703A).